Here is a 622-residue protein sequence, read N- to C-terminus: Mitochondrial distribution and morphology protein 34 (622 aa).

The 195-residue stretch at 1–195 (MAFNFNWSPL…LPAIIHRLSL (195 aa)) folds into the SMP-LTD domain. Disordered regions lie at residues 211–234 (QVTN…DPVD), 303–322 (PSGL…SHVA), 355–432 (SMGA…IRQP), 445–464 (ERNA…PASR), 482–546 (SLQQ…QTHL), and 581–622 (KMGG…AYRH). Over residues 214 to 225 (NPPLEGPGLDPL) the composition is skewed to low complexity. Residues 360–372 (RHSKAHARKRKKR) show a composition bias toward basic residues. Basic and acidic residues predominate over residues 373–384 (VVDLRRRPKNTD). Residues 388–404 (SVSGESEFTESTSAASV) are compositionally biased toward low complexity. Composition is skewed to polar residues over residues 482 to 495 (SLQQ…SKSL) and 522 to 532 (NASNYTSSGDS). Composition is skewed to low complexity over residues 533-543 (QQQQQQQQQHQ) and 592-601 (NNKNDNKNNN).

This sequence belongs to the MDM34 family. As to quaternary structure, component of the ER-mitochondria encounter structure (ERMES) or MDM complex, composed of MMM1, MDM10, MDM12 and MDM34.

It localises to the mitochondrion outer membrane. In terms of biological role, component of the ERMES/MDM complex, which serves as a molecular tether to connect the endoplasmic reticulum (ER) and mitochondria. Components of this complex are involved in the control of mitochondrial shape and protein biogenesis, and function in nonvesicular lipid trafficking between the ER and mitochondria. MDM34 is required for the interaction of the ER-resident membrane protein MMM1 and the outer mitochondrial membrane-resident beta-barrel protein MDM10. The protein is Mitochondrial distribution and morphology protein 34 of Ajellomyces capsulatus (strain G186AR / H82 / ATCC MYA-2454 / RMSCC 2432) (Darling's disease fungus).